Reading from the N-terminus, the 513-residue chain is Type-2 serine--tRNA ligase (513 aa).

A312 contributes to the L-serine binding site. C314 contributes to the Zn(2+) binding site. R344 contacts L-serine. ATP-binding positions include 344–346 (RWE) and 355–356 (RV). L-serine is bound at residue 361 to 363 (RVE). Zn(2+) is bound by residues E363 and C467. An ATP-binding site is contributed by R474.

It belongs to the class-II aminoacyl-tRNA synthetase family. Type-2 seryl-tRNA synthetase subfamily. As to quaternary structure, homodimer. It depends on Zn(2+) as a cofactor.

It is found in the cytoplasm. It carries out the reaction tRNA(Ser) + L-serine + ATP = L-seryl-tRNA(Ser) + AMP + diphosphate + H(+). It catalyses the reaction tRNA(Sec) + L-serine + ATP = L-seryl-tRNA(Sec) + AMP + diphosphate + H(+). Its pathway is aminoacyl-tRNA biosynthesis; selenocysteinyl-tRNA(Sec) biosynthesis; L-seryl-tRNA(Sec) from L-serine and tRNA(Sec): step 1/1. In terms of biological role, catalyzes the attachment of serine to tRNA(Ser). Is also able to aminoacylate tRNA(Sec) with serine, to form the misacylated tRNA L-seryl-tRNA(Sec), which will be further converted into selenocysteinyl-tRNA(Sec). This is Type-2 serine--tRNA ligase (serS) from Methanothermobacter thermautotrophicus (strain ATCC 29096 / DSM 1053 / JCM 10044 / NBRC 100330 / Delta H) (Methanobacterium thermoautotrophicum).